We begin with the raw amino-acid sequence, 96 residues long: Large ribosomal subunit protein eL43 (96 aa).

The C4-type zinc finger occupies 39–60 (CTFCGKTATKRTCVGIWKCKKC).

This sequence belongs to the eukaryotic ribosomal protein eL43 family. As to quaternary structure, component of the large ribosomal subunit. Mature ribosomes consist of a small (40S) and a large (60S) subunit. The 40S subunit contains about 32 different proteins and 1 molecule of RNA (18S). The 60S subunit contains about 42 different proteins and 3 molecules of RNA (28S, 5.8S and 5S).

The protein localises to the cytoplasm. Its function is as follows. Component of the ribosome, a large ribonucleoprotein complex responsible for the synthesis of proteins in the cell. The small ribosomal subunit (SSU) binds messenger RNAs (mRNAs) and translates the encoded message by selecting cognate aminoacyl-transfer RNA (tRNA) molecules. The large subunit (LSU) contains the ribosomal catalytic site termed the peptidyl transferase center (PTC), which catalyzes the formation of peptide bonds, thereby polymerizing the amino acids delivered by tRNAs into a polypeptide chain. The nascent polypeptides leave the ribosome through a tunnel in the LSU and interact with protein factors that function in enzymatic processing, targeting, and the membrane insertion of nascent chains at the exit of the ribosomal tunnel. The polypeptide is Large ribosomal subunit protein eL43 (Plasmodium falciparum (isolate 3D7)).